The sequence spans 89 residues: Small ribosomal subunit protein uS15 (89 aa).

The segment covering 1 to 21 (MSIAAERKAEVIKTNARKDGD) has biased composition (basic and acidic residues). The segment at 1-24 (MSIAAERKAEVIKTNARKDGDTGS) is disordered.

Belongs to the universal ribosomal protein uS15 family. In terms of assembly, part of the 30S ribosomal subunit. Forms a bridge to the 50S subunit in the 70S ribosome, contacting the 23S rRNA.

In terms of biological role, one of the primary rRNA binding proteins, it binds directly to 16S rRNA where it helps nucleate assembly of the platform of the 30S subunit by binding and bridging several RNA helices of the 16S rRNA. Its function is as follows. Forms an intersubunit bridge (bridge B4) with the 23S rRNA of the 50S subunit in the ribosome. This is Small ribosomal subunit protein uS15 from Rhodopseudomonas palustris (strain BisA53).